The primary structure comprises 501 residues: Glycine betaine/proline/ectoine/pipecolic acid transporter OusA (501 aa).

At 1–38 (MKLKRKRVKPIALDDVTIIDDGRLRKAITAAALGNAME) the chain is on the cytoplasmic side. A helical membrane pass occupies residues 39-59 (WFDFGVYGFVAYALGQVFFPG). Residues 60-66 (ADPGVQM) are Periplasmic-facing. Residues 67–87 (IAALATFSVPFLIRPLGGVFF) traverse the membrane as a helical segment. Over 88-98 (GALGDKYGRQK) the chain is Cytoplasmic. Residues 99–119 (ILAITIIIMSISTFCIGLIPS) traverse the membrane as a helical segment. Topologically, residues 120 to 122 (YER) are periplasmic. A helical transmembrane segment spans residues 123 to 143 (IGIWAPILLLLAKMAQGFSVG). At 144-170 (GEYTGASIFVAEYSPDRKRGFMGSWLD) the chain is on the cytoplasmic side. The chain crosses the membrane as a helical span at residues 171 to 191 (FGSIAGFVLGAGVVVLISTLI). Residues 192–195 (GEQA) lie on the Periplasmic side of the membrane. Residues 196 to 216 (FLAWGWRLPFFLALPLGLIGL) traverse the membrane as a helical segment. Topologically, residues 217 to 261 (YLRHALEETPAFRQHVEKLEQNDRDGLKAGPGVSFREIATHHWKS) are cytoplasmic. Residues 262 to 282 (LLVCIGLVIATNVTYYMLLTY) form a helical membrane-spanning segment. At 283–298 (MPSYLSHSLHYSENHG) the chain is on the periplasmic side. The helical transmembrane segment at 299-319 (VLIIIAIMIGMLFVQPVMGLL) threads the bilayer. The Cytoplasmic portion of the chain corresponds to 320–326 (SDRFGRK). A helical membrane pass occupies residues 327–347 (PFVVIGSVAMFFLAVPSFMLI). The Periplasmic segment spans residues 348–350 (NSD). Residues 351–371 (IIGLIFLGLLMLAVILNAFTG) form a helical membrane-spanning segment. Topologically, residues 372-391 (VMASTLPALFPTHIRYSALA) are cytoplasmic. The helical transmembrane segment at 392–412 (SAFNISVLIAGLTPTVAAWLV) threads the bilayer. Over 413 to 417 (ESSQN) the chain is Periplasmic. Residues 418–438 (LYMPAYYLMVIAVIGLLTGLF) form a helical membrane-spanning segment. At 439–501 (MKETANKPLK…LVAQHPRIND (63 aa)) the chain is on the cytoplasmic side. Positions 461–495 (KEILQEHHDNIEHKIEDITQQIAELEAKRQLLVAQ) form a coiled coil.

It belongs to the major facilitator superfamily. Sugar transporter (TC 2.A.1.1) family.

It localises to the cell inner membrane. Its function is as follows. Involved in uptake and accumulation of various osmoprotectants. Allows the uptake of glycine betaine, proline, ectoine, and pipecolic acid. May be a contributory factor in the infection progression within the host. This is Glycine betaine/proline/ectoine/pipecolic acid transporter OusA from Dickeya dadantii (strain 3937) (Erwinia chrysanthemi (strain 3937)).